A 508-amino-acid polypeptide reads, in one-letter code: Cytochrome P450 monooxygenase tenA (508 aa).

A helical membrane pass occupies residues 8-24 (VSLPYLILSACLSVILL). C456 provides a ligand contact to heme.

Belongs to the cytochrome P450 family. Requires heme as cofactor.

Its subcellular location is the membrane. It participates in secondary metabolite biosynthesis. Cytochrome P450 monooxygenase; part of the gene cluster that mediates the biosynthesis of tenellin-type 2-pyridones, iron-chelating compounds involved in iron stress tolerance, competition with the natural competitor fungus Metarhizium robertsii and insect hosts infection. TenA catalyzes an oxidative ring expansion of pretenellin A and 14-hydropretellenin A to form the 2-pyridone core, leading to the production of pretenellin B and pyridovericin, respectively. The pathway begins with the assembly of the polyketide-amino acid backbone by the hybrid PKS-NRPS tenS with the help of the enoyl reductase tenC. These enzymes catalyze the synthesis of the pyrrolidine-2-dione intermediates pretellinin A, 11-hydropretellenin A, 12-hydropretellenin A, 13-hydropretellenin A, 14-hydropretellenin A, 12-oxopretellenin A and prototellinin D. The cytochrome P450 monooxygenase tenA then catalyzes an oxidative ring expansion of pretenellin A and 14-hydropretellenin A to form the 2-pyridone core, leading to pretenellin B and pyridovericin, respectively. The cytochrome P450 monooxygenase tenB is then required for the selective N-hydroxylation of the 2-pyridone nitrogen of yield tellinin and 15-hydroxytellenin (15-HT), respectively. The UDP-glucosyltransferase GT1 and the methyltransferase MT1, located outside the tenS gene cluster, contribute to the stepwise glycosylation and methylation of 15-HT to obtain the glycoside pyridovericin-N-O-(4-O-methyl-beta-D-glucopyranoside) (PMGP). Additional related compounds such as 1-O-methyl-15-HT, (8Z)-1-O-methyl-15-HT, and O-methyltenellin A are also produced but the enzymes involved in their biosynthesis have still to be determined. This Beauveria bassiana (White muscardine disease fungus) protein is Cytochrome P450 monooxygenase tenA.